The following is a 485-amino-acid chain: Glutamyl-tRNA(Gln) amidotransferase subunit A (485 aa).

Residues Lys-76 and Ser-155 each act as charge relay system in the active site. Ser-179 serves as the catalytic Acyl-ester intermediate.

It belongs to the amidase family. GatA subfamily. In terms of assembly, heterotrimer of A, B and C subunits.

It carries out the reaction L-glutamyl-tRNA(Gln) + L-glutamine + ATP + H2O = L-glutaminyl-tRNA(Gln) + L-glutamate + ADP + phosphate + H(+). Allows the formation of correctly charged Gln-tRNA(Gln) through the transamidation of misacylated Glu-tRNA(Gln) in organisms which lack glutaminyl-tRNA synthetase. The reaction takes place in the presence of glutamine and ATP through an activated gamma-phospho-Glu-tRNA(Gln). The chain is Glutamyl-tRNA(Gln) amidotransferase subunit A from Marinobacter nauticus (strain ATCC 700491 / DSM 11845 / VT8) (Marinobacter aquaeolei).